Here is a 527-residue protein sequence, read N- to C-terminus: UDP-glucuronosyltransferase 2A3 (527 aa).

The N-terminal stretch at M1–C23 is a signal peptide. Residues G24–V491 are Extracellular-facing. An N-linked (GlcNAc...) asparagine glycan is attached at N313. Residues I492–F512 form a helical membrane-spanning segment. At S513–E527 the chain is on the cytoplasmic side.

This sequence belongs to the UDP-glycosyltransferase family.

The protein localises to the membrane. It carries out the reaction glucuronate acceptor + UDP-alpha-D-glucuronate = acceptor beta-D-glucuronoside + UDP + H(+). In terms of biological role, UDP-glucuronosyltransferases catalyze phase II biotransformation reactions in which lipophilic substrates are conjugated with glucuronic acid to increase water solubility and enhance excretion. They are of major importance in the conjugation and subsequent elimination of potentially toxic xenobiotics and endogenous compounds. The protein is UDP-glucuronosyltransferase 2A3 (UGT2A3) of Homo sapiens (Human).